Consider the following 366-residue polypeptide: Outer membrane protein IIIA (366 aa).

Positions 1 to 22 are cleaved as a signal peptide; it reads MNIRMVLLASAAAFAASTPVLA.

The protein belongs to the alphaproteobacteria porin family. In terms of assembly, forms calcium-stabilized oligomers. Post-translationally, attached covalently to peptidoglycan.

It is found in the cell outer membrane. Functionally, may act as an outer membrane pore. The polypeptide is Outer membrane protein IIIA (ropA) (Rhizobium leguminosarum bv. viciae).